A 229-amino-acid polypeptide reads, in one-letter code: Aminopyrimidine aminohydrolase (229 aa).

D44 is a binding site for substrate. The Nucleophile role is filled by C137. The substrate site is built by Y141 and Y167. E208 serves as the catalytic Proton donor.

The protein belongs to the TenA family. In terms of assembly, homotetramer.

It carries out the reaction 4-amino-5-aminomethyl-2-methylpyrimidine + H2O = 4-amino-5-hydroxymethyl-2-methylpyrimidine + NH4(+). It catalyses the reaction thiamine + H2O = 5-(2-hydroxyethyl)-4-methylthiazole + 4-amino-5-hydroxymethyl-2-methylpyrimidine + H(+). The protein operates within cofactor biosynthesis; thiamine diphosphate biosynthesis. Functionally, catalyzes an amino-pyrimidine hydrolysis reaction at the C5' of the pyrimidine moiety of thiamine compounds, a reaction that is part of a thiamine salvage pathway. Thus, catalyzes the conversion of 4-amino-5-aminomethyl-2-methylpyrimidine to 4-amino-5-hydroxymethyl-2-methylpyrimidine (HMP). Is also able to catalyze the hydrolytic cleavage of thiamine; however, this thiaminase activity may not be physiologically relevant. Therefore, is probably involved in the regeneration of the thiamine pyrimidine from thiamine degraded products present in the environment, rather than in thiamine degradation. This is Aminopyrimidine aminohydrolase from Staphylococcus aureus (strain MRSA252).